Here is a 419-residue protein sequence, read N- to C-terminus: UDP-N-acetylglucosamine 1-carboxyvinyltransferase (419 aa).

Lysine 22–asparagine 23 contacts phosphoenolpyruvate. Arginine 95 serves as a coordination point for UDP-N-acetyl-alpha-D-glucosamine. Cysteine 119 functions as the Proton donor in the catalytic mechanism. Cysteine 119 bears the 2-(S-cysteinyl)pyruvic acid O-phosphothioketal mark. UDP-N-acetyl-alpha-D-glucosamine is bound by residues lysine 164–valine 167, aspartate 308, and isoleucine 330.

This sequence belongs to the EPSP synthase family. MurA subfamily.

The protein resides in the cytoplasm. It carries out the reaction phosphoenolpyruvate + UDP-N-acetyl-alpha-D-glucosamine = UDP-N-acetyl-3-O-(1-carboxyvinyl)-alpha-D-glucosamine + phosphate. Its pathway is cell wall biogenesis; peptidoglycan biosynthesis. In terms of biological role, cell wall formation. Adds enolpyruvyl to UDP-N-acetylglucosamine. The protein is UDP-N-acetylglucosamine 1-carboxyvinyltransferase of Rickettsia rickettsii (strain Iowa).